Reading from the N-terminus, the 30-residue chain is Cyclotide hypa-A (30 aa).

A cross-link (cyclopeptide (Gly-Asn)) is located at residues 1–30 (GIPCAESCVYIPCTITALLGCSCKNKVCYN). Disulfide bonds link Cys4-Cys21, Cys8-Cys23, and Cys13-Cys28.

This is a cyclic peptide.

Probably participates in a plant defense mechanism. The chain is Cyclotide hypa-A from Pombalia parviflora (Violetilla).